The chain runs to 118 residues: Phosphoribosyl-AMP cyclohydrolase (118 aa).

D87 provides a ligand contact to Mg(2+). Residue C88 participates in Zn(2+) binding. Positions 89 and 91 each coordinate Mg(2+). Residues C104 and C111 each contribute to the Zn(2+) site.

The protein belongs to the PRA-CH family. As to quaternary structure, homodimer. Requires Mg(2+) as cofactor. Zn(2+) serves as cofactor.

It is found in the cytoplasm. It catalyses the reaction 1-(5-phospho-beta-D-ribosyl)-5'-AMP + H2O = 1-(5-phospho-beta-D-ribosyl)-5-[(5-phospho-beta-D-ribosylamino)methylideneamino]imidazole-4-carboxamide. The protein operates within amino-acid biosynthesis; L-histidine biosynthesis; L-histidine from 5-phospho-alpha-D-ribose 1-diphosphate: step 3/9. In terms of biological role, catalyzes the hydrolysis of the adenine ring of phosphoribosyl-AMP. In Corynebacterium glutamicum (strain ATCC 13032 / DSM 20300 / JCM 1318 / BCRC 11384 / CCUG 27702 / LMG 3730 / NBRC 12168 / NCIMB 10025 / NRRL B-2784 / 534), this protein is Phosphoribosyl-AMP cyclohydrolase.